Here is a 139-residue protein sequence, read N- to C-terminus: uncharacterized protein (139 aa).

Helical transmembrane passes span 35-55 (AYFK…AAAA) and 119-139 (CCLF…VFCV).

It is found in the membrane. This is an uncharacterized protein from Saccharomyces cerevisiae (strain ATCC 204508 / S288c) (Baker's yeast).